A 289-amino-acid chain; its full sequence is Doxorubicin resistance ABC transporter permease protein DrrB (289 aa).

In terms of domain architecture, ABC transmembrane type-2 spans 47–282 (GEVLTTVGAP…FVVILALSST (236 aa)). 6 helical membrane passes run 49-69 (VLTT…PFAI), 88-108 (QYIT…GSGF), 138-158 (WVAV…GYVI), 166-186 (ALYI…LSFA), 199-219 (AMLP…IGLM), and 266-286 (TLTW…IVLA).

It belongs to the ABC-2 integral membrane protein family. As to quaternary structure, the complex is composed of two ATP-binding proteins (DrrA) and two transmembrane proteins (DrrB and DrrC).

Its subcellular location is the cell membrane. In terms of biological role, part of the ABC transporter complex DrrABC involved in doxorubicin resistance. Probably responsible for the translocation of the substrate across the membrane. In Mycobacterium tuberculosis (strain CDC 1551 / Oshkosh), this protein is Doxorubicin resistance ABC transporter permease protein DrrB (drrB).